The following is a 232-amino-acid chain: 7-cyano-7-deazaguanine synthase (232 aa).

8-18 is a binding site for ATP; that stretch reads FSGGQDSTTCL. The Zn(2+) site is built by C189, C198, C201, and C204.

Belongs to the QueC family. The cofactor is Zn(2+).

It carries out the reaction 7-carboxy-7-deazaguanine + NH4(+) + ATP = 7-cyano-7-deazaguanine + ADP + phosphate + H2O + H(+). It functions in the pathway purine metabolism; 7-cyano-7-deazaguanine biosynthesis. Its function is as follows. Catalyzes the ATP-dependent conversion of 7-carboxy-7-deazaguanine (CDG) to 7-cyano-7-deazaguanine (preQ(0)). The sequence is that of 7-cyano-7-deazaguanine synthase from Yersinia enterocolitica serotype O:8 / biotype 1B (strain NCTC 13174 / 8081).